The primary structure comprises 321 residues: Lipoyl synthase (321 aa).

Residues cysteine 68, cysteine 73, cysteine 79, cysteine 94, cysteine 98, cysteine 101, and serine 308 each coordinate [4Fe-4S] cluster. One can recognise a Radical SAM core domain in the interval 80–297; the sequence is FNHGTATFMI…KAEAMAMGFT (218 aa).

This sequence belongs to the radical SAM superfamily. Lipoyl synthase family. Requires [4Fe-4S] cluster as cofactor.

The protein resides in the cytoplasm. It catalyses the reaction [[Fe-S] cluster scaffold protein carrying a second [4Fe-4S](2+) cluster] + N(6)-octanoyl-L-lysyl-[protein] + 2 oxidized [2Fe-2S]-[ferredoxin] + 2 S-adenosyl-L-methionine + 4 H(+) = [[Fe-S] cluster scaffold protein] + N(6)-[(R)-dihydrolipoyl]-L-lysyl-[protein] + 4 Fe(3+) + 2 hydrogen sulfide + 2 5'-deoxyadenosine + 2 L-methionine + 2 reduced [2Fe-2S]-[ferredoxin]. The protein operates within protein modification; protein lipoylation via endogenous pathway; protein N(6)-(lipoyl)lysine from octanoyl-[acyl-carrier-protein]: step 2/2. Its function is as follows. Catalyzes the radical-mediated insertion of two sulfur atoms into the C-6 and C-8 positions of the octanoyl moiety bound to the lipoyl domains of lipoate-dependent enzymes, thereby converting the octanoylated domains into lipoylated derivatives. The sequence is that of Lipoyl synthase from Klebsiella pneumoniae (strain 342).